A 177-amino-acid polypeptide reads, in one-letter code: Calcineurin subunit B (177 aa).

4 EF-hand domains span residues 25–60, 62–92, 94–129, and 135–170; these read KEIK…AVNP, VKRV…FNAQ, DKQR…MVGN, and QLQQ…QDLE. Asp38, Asp40, Asn42, Thr44, Glu49, Asp70, Asn72, Asp74, Ser76, Glu81, Asp107, Asp109, Asp111, Tyr113, Glu118, Asp148, Asp150, Asp152, Lys154, and Glu159 together coordinate Ca(2+).

Belongs to the calcineurin regulatory subunit family. Composed of a catalytic subunit (A) and a regulatory subunit (B).

In terms of biological role, regulatory subunit of calcineurin, a calcium-dependent, calmodulin stimulated protein phosphatase. Confers calcium sensitivity. This Naegleria gruberi (Amoeba) protein is Calcineurin subunit B (CNB1).